A 359-amino-acid polypeptide reads, in one-letter code: Replication-associated protein (359 aa).

Residues 8-116 (QINAKHYFLT…DGDVLEWGTF (109 aa)) enclose the CRESS-DNA virus Rep endonuclease domain. The RCR-1 motif lies at 15–18 (FLTF). Residues glutamate 49, histidine 57, and histidine 59 each contribute to the a divalent metal cation site. An RCR-2 motif is present at residues 57–59 (HLH). Tyrosine 103 (for DNA cleavage activity) is an active-site residue. The short motif at 103-106 (YIDK) is the RCR-3 element. Aspartate 107 contributes to the a divalent metal cation binding site. The interval 143–153 (KSEALDVIKEL) is binding to RBR1. An oligomerization region spans residues 156 to 176 (RDYILHFHNINSNLNMVFQVP). 221 to 228 (GDSRTGKT) contacts ATP.

It belongs to the geminiviridae Rep protein family. Homooligomer. Interacts with the replication enhancer protein (REn). Interacts with host retinoblastoma-related protein 1 (RBR1), and may thereby induce the transcription of host replicative enzymes even if the cell is not dividing anymore. Interacts with host PCNA. Interacts with host SCE1 protein. The cofactor is Mg(2+). Requires Mn(2+) as cofactor.

It is found in the host nucleus. Its function is as follows. Essential for the replication of viral ssDNA. The closed circular ssDNA genome is first converted to a superhelical dsDNA. Rep binds a specific region at the genome origin of replication. It introduces an endonucleolytic nick within the conserved sequence 5'-TAATATTAC-3' in the intergenic region of the genome present in all geminiviruses, thereby initiating the rolling circle replication (RCR). Following cleavage, binds covalently to the 5'-phosphate of DNA as a tyrosyl ester. The cleavage gives rise to a free 3'-OH that serves as a primer for the cellular DNA polymerase. The polymerase synthesizes the (+) strand DNA by rolling circle mechanism. After one round of replication, a Rep-catalyzed nucleotidyl transfer reaction releases a circular single-stranded virus genome, thereby terminating the replication. Displays origin-specific DNA cleavage, nucleotidyl transferase, ATPase and helicase activities. This chain is Replication-associated protein, found in Solanum lycopersicum (Tomato).